Reading from the N-terminus, the 244-residue chain is 1-(5-phosphoribosyl)-5-[(5-phosphoribosylamino)methylideneamino] imidazole-4-carboxamide isomerase (244 aa).

Catalysis depends on aspartate 10, which acts as the Proton acceptor. Aspartate 129 functions as the Proton donor in the catalytic mechanism.

The protein belongs to the HisA/HisF family.

It localises to the cytoplasm. The catalysed reaction is 1-(5-phospho-beta-D-ribosyl)-5-[(5-phospho-beta-D-ribosylamino)methylideneamino]imidazole-4-carboxamide = 5-[(5-phospho-1-deoxy-D-ribulos-1-ylimino)methylamino]-1-(5-phospho-beta-D-ribosyl)imidazole-4-carboxamide. Its pathway is amino-acid biosynthesis; L-histidine biosynthesis; L-histidine from 5-phospho-alpha-D-ribose 1-diphosphate: step 4/9. The protein is 1-(5-phosphoribosyl)-5-[(5-phosphoribosylamino)methylideneamino] imidazole-4-carboxamide isomerase of Rhodococcus jostii (strain RHA1).